The chain runs to 127 residues: V-type proton ATPase subunit F (127 aa).

The protein belongs to the V-ATPase F subunit family. As to quaternary structure, V-ATPase is a heteromultimeric enzyme made up of two complexes: the ATP-hydrolytic V1 complex and the proton translocation V0 complex. The V1 complex consists of three catalytic AB heterodimers that form a heterohexamer, three peripheral stalks each consisting of EG heterodimers, one central rotor including subunits D and F, and the regulatory subunits C and H. The proton translocation complex V0 consists of the proton transport subunit a, a ring of proteolipid subunits c9c'', rotary subunit d, subunits e and f, and the accessory subunits VhaAC45 and ATP6AP2.

In terms of biological role, subunit of the V1 complex of vacuolar(H+)-ATPase (V-ATPase), a multisubunit enzyme composed of a peripheral complex (V1) that hydrolyzes ATP and a membrane integral complex (V0) that translocates protons. V-ATPase is responsible for acidifying and maintaining the pH of intracellular compartments and in some cell types, is targeted to the plasma membrane, where it is responsible for acidifying the extracellular environment. In Anopheles gambiae (African malaria mosquito), this protein is V-type proton ATPase subunit F (Vha14).